A 214-amino-acid chain; its full sequence is Large ribosomal subunit protein uL3 (214 aa).

Belongs to the universal ribosomal protein uL3 family. Part of the 50S ribosomal subunit. Forms a cluster with proteins L14 and L19.

One of the primary rRNA binding proteins, it binds directly near the 3'-end of the 23S rRNA, where it nucleates assembly of the 50S subunit. This chain is Large ribosomal subunit protein uL3, found in Streptomyces coelicolor (strain ATCC BAA-471 / A3(2) / M145).